Consider the following 324-residue polypeptide: Esterase FPSE_08126 (324 aa).

Active-site residues include Ser156, Asp255, and His285.

This sequence belongs to the AB hydrolase 3 family.

In terms of biological role, esterase; part of the Fusarium detoxification of benzoxazolinone cluster involved in the degradation of benzoxazolinones produced by the host plant. Maize, wheat, and rye produce the 2 benzoxazinone phytoanticipins 2,4-dihy-droxy-7-methoxy-1,4-benzoxazin-3-one (DIMBOA) and 2,4-dihydroxy-1,4-benzoxazin-3-one (DIBOA) that, due to their inherent instability once released, spontaneously degrade to the more stable corresponding benzoxazolinones, 6-methoxy-2-benzoxazolinone (MBOA) and 2-benzoxazolinone (BOA), respectively. The first step in the detoxification of benzoxazolinones involves the hydrolysis of the cyclic ester bond of benzoxazolinones by the gamma-lactamase FDB1 to aminophenols. FDB1 is able to convert 2-benzoxazolinone (BOA) into 2-aminophenol (2-AP), as well as 6-methoxy-2-benzoxazolinone (MBOA) into 5-methoxy-2-aminophenol (2-AMP). The N-malonyltransferase FDB2 then metabolizes aminophenols via N-malonylation to non-toxic malonamic acids. FDB2 converts 2-AP into N-(2-hydroxyphenyl) malonamic acid (HPMA) and 2-AMP into N-(2-hydroxy-4-methoxyphenyl) malonamic acid (HMPMA). The cluster also contains 2 transcription factors (FDB3 and FPSE_08121), an aldo-keto reductase (FPSE_08125) that possibly associates with a ketone component of BOA and MBOA degradation, an esterase (FPSE_08126), an acyl-CoA transferase (FPSE_08120), a solute carrier protein (FPSE_08119) and a transmembrane transporter (FPSE_08127) proposed to shuttle metabolites of benzoxazolinone degradation. The chain is Esterase FPSE_08126 from Fusarium pseudograminearum (strain CS3096) (Wheat and barley crown-rot fungus).